A 127-amino-acid chain; its full sequence is Major sperm protein 49 (127 aa).

Residue alanine 2 is modified to N-acetylalanine. In terms of domain architecture, MSP spans 9 to 126 (DIQTQPGTKI…RRKNLPIEYN (118 aa)).

Sperm.

The protein localises to the cell projection. The protein resides in the pseudopodium. It localises to the cytoplasm. Its subcellular location is the cytoskeleton. In terms of biological role, central component in molecular interactions underlying sperm crawling. Forms an extensive filament system that extends from sperm villipoda, along the leading edge of the pseudopod. In Caenorhabditis elegans, this protein is Major sperm protein 49 (msp-49).